A 397-amino-acid polypeptide reads, in one-letter code: Probable sugar efflux transporter (397 aa).

12 helical membrane passes run 15-35 (VIVM…PVAL), 51-71 (GLMI…CMLM), 80-100 (LLIS…FAWN), 103-123 (VLLI…SITA), 137-157 (QALG…LPLG), 169-189 (TFTL…RLLP), 209-229 (PMLI…FTAY), 246-266 (KATA…VLFS), 277-297 (LLSS…VSGI), 299-319 (GAIF…SLAM), 333-353 (VATA…ALIG), and 365-385 (IGYV…LMFL).

This sequence belongs to the major facilitator superfamily. SotB (TC 2.A.1.2) family.

The protein resides in the cell inner membrane. Functionally, involved in the efflux of sugars. The physiological role may be the reduction of the intracellular concentration of toxic sugars or sugar metabolites. The sequence is that of Probable sugar efflux transporter from Mannheimia succiniciproducens (strain KCTC 0769BP / MBEL55E).